The primary structure comprises 42 residues: Protein YkgS (42 aa).

The sequence is that of Protein YkgS (ykgS) from Escherichia coli (strain K12).